Here is a 148-residue protein sequence, read N- to C-terminus: 18 kDa antigen (148 aa).

One can recognise a sHSP domain in the interval 21–131; that stretch reads TSARPAVMPM…KPRKISVDRG (111 aa).

It belongs to the small heat shock protein (HSP20) family.

Functionally, not known. This protein is one of the major immune reactive proteins in mycobacteria. This is 18 kDa antigen (hsp18) from Mycobacterium leprae (strain TN).